We begin with the raw amino-acid sequence, 515 residues long: Maturase K (515 aa).

The protein belongs to the intron maturase 2 family. MatK subfamily.

The protein resides in the plastid. It is found in the chloroplast. Its function is as follows. Usually encoded in the trnK tRNA gene intron. Probably assists in splicing its own and other chloroplast group II introns. This chain is Maturase K, found in Alpinia calcarata (Snap ginger).